A 349-amino-acid polypeptide reads, in one-letter code: Phosphoribosylformylglycinamidine cyclo-ligase (349 aa).

Belongs to the AIR synthase family.

The protein localises to the cytoplasm. It carries out the reaction 2-formamido-N(1)-(5-O-phospho-beta-D-ribosyl)acetamidine + ATP = 5-amino-1-(5-phospho-beta-D-ribosyl)imidazole + ADP + phosphate + H(+). Its pathway is purine metabolism; IMP biosynthesis via de novo pathway; 5-amino-1-(5-phospho-D-ribosyl)imidazole from N(2)-formyl-N(1)-(5-phospho-D-ribosyl)glycinamide: step 2/2. This is Phosphoribosylformylglycinamidine cyclo-ligase from Listeria monocytogenes serovar 1/2a (strain ATCC BAA-679 / EGD-e).